Consider the following 648-residue polypeptide: Mitotic interactor and substrate of PLK1 (648 aa).

Ser-77 carries the phosphoserine; by CDK1 modification. Phosphothreonine occurs at positions 149 and 190. The residue at position 220 (Ser-220) is a Phosphoserine. Disordered regions lie at residues 242–383 (VNDP…PEAR) and 430–460 (KATE…GKAT). Residue Ser-253 is modified to Phosphoserine; by CDK1. Residues 255–281 (ETPKETPIEREIRLAQEREAELREQRG) show a composition bias toward basic and acidic residues. Thr-256 bears the Phosphothreonine; by CDK1 mark. Ser-318 is subject to Phosphoserine. Over residues 325 to 339 (MVQETQREEDHRREG) the composition is skewed to basic and acidic residues. Thr-347 bears the Phosphothreonine; by CDK1 mark. The segment covering 349–367 (DWPSQDPQPGLQRSLSSDC) has biased composition (polar residues). A phosphoserine mark is found at Ser-352 and Ser-364. 2 positions are modified to phosphoserine; by PLK1: Ser-365 and Ser-439. Polar residues predominate over residues 440 to 450 (ESSGRSLSSKQ). 2 positions are modified to phosphoserine: Ser-507 and Ser-509. A coiled-coil region spans residues 511-534 (DLLEREMESVLRREREVAEERRNA). The tract at residues 539 to 568 (VFSPVPAEDESHEQDSRSSSRASGITGSYS) is disordered. Position 541 is a phosphoserine; by CDK1 (Ser-541). Ser-554 is modified (phosphoserine; by PLK1). A compositionally biased stretch (polar residues) spans 557 to 568 (SSRASGITGSYS). Ser-644 is modified (phosphoserine).

This sequence belongs to the MISP family. As to quaternary structure, associates with F-actin. Interacts with DCTN1; this interaction regulates DCTN1 distribution at the cell cortex. Interacts with PTK2/FAK and MAPRE1. Post-translationally, phosphorylated by CDK1 and PLK1. CDK1 is the priming kinase for PLK1 phosphorylation. Phosphorylation by PLK1 is required for proper spindle orientation at metaphase.

It localises to the cell junction. Its subcellular location is the focal adhesion. The protein resides in the cytoplasm. It is found in the cytoskeleton. The protein localises to the cell cortex. Functionally, plays a role in mitotic spindle orientation and mitotic progression. Regulates the distribution of dynactin at the cell cortex in a PLK1-dependent manner, thus stabilizing cortical and astral microtubule attachments required for proper mitotic spindle positioning. May link microtubules to the actin cytoskeleton and focal adhesions. May be required for directed cell migration and centrosome orientation. May also be necessary for proper stacking of the Golgi apparatus. The protein is Mitotic interactor and substrate of PLK1 of Mus musculus (Mouse).